Consider the following 435-residue polypeptide: SGFHLSFSFFRRAVCGIRPTLSGFIVGGTVAPINSWPWQAKLRIAGNFLCGGSLIQPEWVLTAAHCVEGESPSIIKVTLGAHYLSTAQVVGTEQYFDVVQIIQHENYKMPKRFSNDVALLKLSRPAALRNGVGLVCLSDDQFQRPFNGTSCWTTGWGRLSWPGPVAKELMQVDLPLVSPQNCLSSYPNGYDPNTMICAGRSQGGTGACRGDSGGPLVCEFKGKWYLEGVTSWGQLPCDLPNKPTVYADVRKLKSWITGKISRSPALKVATNCSSVLNNTLKSPGYPDSYPINMFCVYRVPIPCDTELVIHFNSFHLENHVFCWYDRLRITDGSNRVIGTYCGQQTGRSVLVNDTVAVLTFKTDRSLNSSGFHLSFSFFPRGNATLLPFTTPTQTTTQRPTTTPTPGCGVVQNNTLRSPGYPSNYPRNTHCVYRVF.

Residues S1–G16 form the signal peptide. Positions I25 to S261 constitute a Peptidase S1 domain. C50 and C66 are joined by a disulfide. Catalysis depends on charge relay system residues H65 and D116. 4 disulfide bridges follow: C151–C218, C182–C197, C208–C237, and C322–C341. S212 serves as the catalytic Charge relay system. The CUB domain occupies I256–F378.

It belongs to the peptidase S1 family. As to expression, component of the acid-insoluble organic matrix of the aragonitic skeleton (at protein level).

The protein resides in the secreted. This chain is CUB and peptidase domain-containing protein 1, found in Acropora millepora (Staghorn coral).